A 229-amino-acid chain; its full sequence is UPF0758 protein Mbar_A2303 (229 aa).

The MPN domain occupies 106 to 228; that stretch reads KVCSPKDVYT…YVSLKDEGFV (123 aa). Residues H177, H179, and D190 each coordinate Zn(2+). The short motif at 177-190 is the JAMM motif element; that stretch reads HNHPSGDPSPSRED.

The protein belongs to the UPF0758 family.

The chain is UPF0758 protein Mbar_A2303 from Methanosarcina barkeri (strain Fusaro / DSM 804).